Reading from the N-terminus, the 393-residue chain is Probable tRNA sulfurtransferase (393 aa).

A THUMP domain is found at 61-168 (DEVIESLTRV…GDVINIYSIE (108 aa)). ATP contacts are provided by residues 186–187 (LL), 211–212 (YF), Arg-268, Gly-290, and Gln-299.

It belongs to the ThiI family.

It is found in the cytoplasm. It catalyses the reaction [ThiI sulfur-carrier protein]-S-sulfanyl-L-cysteine + a uridine in tRNA + 2 reduced [2Fe-2S]-[ferredoxin] + ATP + H(+) = [ThiI sulfur-carrier protein]-L-cysteine + a 4-thiouridine in tRNA + 2 oxidized [2Fe-2S]-[ferredoxin] + AMP + diphosphate. The catalysed reaction is [ThiS sulfur-carrier protein]-C-terminal Gly-Gly-AMP + S-sulfanyl-L-cysteinyl-[cysteine desulfurase] + AH2 = [ThiS sulfur-carrier protein]-C-terminal-Gly-aminoethanethioate + L-cysteinyl-[cysteine desulfurase] + A + AMP + 2 H(+). It functions in the pathway cofactor biosynthesis; thiamine diphosphate biosynthesis. Functionally, catalyzes the ATP-dependent transfer of a sulfur to tRNA to produce 4-thiouridine in position 8 of tRNAs, which functions as a near-UV photosensor. Also catalyzes the transfer of sulfur to the sulfur carrier protein ThiS, forming ThiS-thiocarboxylate. This is a step in the synthesis of thiazole, in the thiamine biosynthesis pathway. The sulfur is donated as persulfide by IscS. The chain is Probable tRNA sulfurtransferase from Lachnospira eligens (strain ATCC 27750 / DSM 3376 / VPI C15-48 / C15-B4) (Eubacterium eligens).